The following is a 256-amino-acid chain: Triosephosphate isomerase (256 aa).

10–12 contributes to the substrate binding site; that stretch reads NWK. The active-site Electrophile is the histidine 97. The active-site Proton acceptor is glutamate 169. Residues glycine 175, serine 214, and 235-236 each bind substrate; that span reads GG.

It belongs to the triosephosphate isomerase family. As to quaternary structure, homodimer.

It is found in the cytoplasm. The catalysed reaction is D-glyceraldehyde 3-phosphate = dihydroxyacetone phosphate. The protein operates within carbohydrate biosynthesis; gluconeogenesis. Its pathway is carbohydrate degradation; glycolysis; D-glyceraldehyde 3-phosphate from glycerone phosphate: step 1/1. In terms of biological role, involved in the gluconeogenesis. Catalyzes stereospecifically the conversion of dihydroxyacetone phosphate (DHAP) to D-glyceraldehyde-3-phosphate (G3P). In Haemophilus ducreyi (strain 35000HP / ATCC 700724), this protein is Triosephosphate isomerase.